We begin with the raw amino-acid sequence, 186 residues long: Acireductone dioxygenase (186 aa).

Fe(2+)-binding residues include His103, His105, Glu109, and His147. 4 residues coordinate Ni(2+): His103, His105, Glu109, and His147.

This sequence belongs to the acireductone dioxygenase (ARD) family. Monomer. Requires Fe(2+) as cofactor. The cofactor is Ni(2+).

It carries out the reaction 1,2-dihydroxy-5-(methylsulfanyl)pent-1-en-3-one + O2 = 3-(methylsulfanyl)propanoate + CO + formate + 2 H(+). The catalysed reaction is 1,2-dihydroxy-5-(methylsulfanyl)pent-1-en-3-one + O2 = 4-methylsulfanyl-2-oxobutanoate + formate + 2 H(+). It participates in amino-acid biosynthesis; L-methionine biosynthesis via salvage pathway; L-methionine from S-methyl-5-thio-alpha-D-ribose 1-phosphate: step 5/6. Its function is as follows. Catalyzes 2 different reactions between oxygen and the acireductone 1,2-dihydroxy-3-keto-5-methylthiopentene (DHK-MTPene) depending upon the metal bound in the active site. Fe-containing acireductone dioxygenase (Fe-ARD) produces formate and 2-keto-4-methylthiobutyrate (KMTB), the alpha-ketoacid precursor of methionine in the methionine recycle pathway. Ni-containing acireductone dioxygenase (Ni-ARD) produces methylthiopropionate, carbon monoxide and formate, and does not lie on the methionine recycle pathway. In Synechococcus sp. (strain CC9605), this protein is Acireductone dioxygenase.